A 357-amino-acid polypeptide reads, in one-letter code: S-adenosylmethionine:tRNA ribosyltransferase-isomerase (357 aa).

This sequence belongs to the QueA family. As to quaternary structure, monomer.

The protein resides in the cytoplasm. The catalysed reaction is 7-aminomethyl-7-carbaguanosine(34) in tRNA + S-adenosyl-L-methionine = epoxyqueuosine(34) in tRNA + adenine + L-methionine + 2 H(+). It participates in tRNA modification; tRNA-queuosine biosynthesis. In terms of biological role, transfers and isomerizes the ribose moiety from AdoMet to the 7-aminomethyl group of 7-deazaguanine (preQ1-tRNA) to give epoxyqueuosine (oQ-tRNA). This chain is S-adenosylmethionine:tRNA ribosyltransferase-isomerase, found in Buchnera aphidicola subsp. Acyrthosiphon pisum (strain Tuc7).